The sequence spans 485 residues: MIKKKNSPADKYLIKSQIGSGSYGNTFKVTHKESGQVFCKKSIQVNNQENIEKVLEEGKILTVMDHVNVVKLNDSFFENGNYVIIMEFAENGDLFQKIENQKRSGKPFSDFEIMHYFCQLVIALNYIHSQNIIHRDIKPKNIVLSSSDSGSGSGSGSGSSNDSIPLLKIADFGVSKLMSETDLYANTTAGTPQYVSYEICNKKPYTNKTDIWSLGVVLYELMTLSLPFDGRKETVMRNIQTESTIFKPVNHPNEELSSLLFKLLNKNPESRFSTQQILEQVFIREFIENHMVDFYKRFNFSIDGIFKVISKKLNLAGLNLTKEEKDNLEHKFIFTKMQEMKDRMKAFDTNHINKNQQQQSPQKLENNNNNNNDNNNNNNNNNNNNNNNNNNNNNNNNNNNNNNNNNNNNNNDKNNNINNNVNYNVLKKVSVELGFNLDNYCYDTDGMLIELVRSKLEGKDRKTYSKCYNYLSNKQSAFTNTNNEY.

The 272-residue stretch at 12–283 (YLIKSQIGSG…TQQILEQVFI (272 aa)) folds into the Protein kinase domain. ATP contacts are provided by residues 18 to 26 (IGSGSYGNT) and K41. The Proton acceptor role is filled by D136. A compositionally biased stretch (polar residues) spans 354 to 365 (KNQQQQSPQKLE). The interval 354 to 419 (KNQQQQSPQK…NNDKNNNINN (66 aa)) is disordered. Low complexity predominate over residues 366–419 (NNNNNNNDNNNNNNNNNNNNNNNNNNNNNNNNNNNNNNNNNNNNNNDKNNNINN).

The protein belongs to the protein kinase superfamily. NEK Ser/Thr protein kinase family. NIMA subfamily.

The catalysed reaction is L-seryl-[protein] + ATP = O-phospho-L-seryl-[protein] + ADP + H(+). It catalyses the reaction L-threonyl-[protein] + ATP = O-phospho-L-threonyl-[protein] + ADP + H(+). This is Probable serine/threonine-protein kinase nek1 (nek1) from Dictyostelium discoideum (Social amoeba).